The following is a 172-amino-acid chain: Protein-export protein SecB (172 aa).

Positions 153-172 are disordered; it reads AQGQGGDSGIVMPDGSQARH.

Belongs to the SecB family. In terms of assembly, homotetramer, a dimer of dimers. One homotetramer interacts with 1 SecA dimer.

Its subcellular location is the cytoplasm. In terms of biological role, one of the proteins required for the normal export of preproteins out of the cell cytoplasm. It is a molecular chaperone that binds to a subset of precursor proteins, maintaining them in a translocation-competent state. It also specifically binds to its receptor SecA. This chain is Protein-export protein SecB, found in Cupriavidus metallidurans (strain ATCC 43123 / DSM 2839 / NBRC 102507 / CH34) (Ralstonia metallidurans).